Consider the following 157-residue polypeptide: MISSVPYRERQSIGGIRSCPHSPASSRFPRVNDSAPTVFQGWDVPIGTPISMNIWNTHYNKDFFPGPTEFWPERWMGEGTRELEKYLVPFGSGSRMCTGQNLSIAEQVLTIATLFRNYELELYQTTKKNVVMASYCMISLPGSESPGIQVKVRKTVQ.

C97 contributes to the heme binding site.

Belongs to the cytochrome P450 family. Heme is required as a cofactor.

It participates in secondary metabolite biosynthesis. In terms of biological role, cytochrome P450 monooxygenase; part of the gene cluster that mediates the biosynthesis of terreic acid, a quinone epoxide inhibitor of Bruton's tyrosine kinase (BTK). The first step of the pathway is the synthesis of 6-methylsalicylic acid (6-MSA) by the 6-methylsalicylic acid synthase atX. In the biosynthesis of 6-MSA, atX utilizes one acetyl-CoA and three malonyl-CoAs as its substrates and catalyzes a series of programmed reactions including Claisen condensation, reduction, aldol cyclization, and the hydrolytic cleavage that yields 6-MSA. The 6-methylsalicylate 1-monooxygenase atA then catalyzes the decarboxylative hydroxylation of 6-MSA to 3-methylcatechol. The next step is the conversion of 3-methylcatechol to 3-methyl-1,2,4-benzenetriol by cytochrome P450 monooxygenase atE, which is enhanced by cytochrome P450 monooxygenase atG. Then, the epoxidase atD catalyzes the epoxidation and hydroxyl oxidation of 3-methyl-1,2,4-benzenetriol to terremutin. Lastly, GMC oxidoreductase atC oxidizes terremutin to terreic acid. The chain is Cytochrome P450 monooxygenase atG from Aspergillus terreus (strain NIH 2624 / FGSC A1156).